Here is a 429-residue protein sequence, read N- to C-terminus: Enolase (429 aa).

Gln-162 contributes to the (2R)-2-phosphoglycerate binding site. Glu-204 serves as the catalytic Proton donor. Residues Asp-241, Glu-283, and Asp-310 each contribute to the Mg(2+) site. (2R)-2-phosphoglycerate-binding residues include Lys-335, Arg-364, Ser-365, and Lys-386. The active-site Proton acceptor is the Lys-335.

Belongs to the enolase family. Mg(2+) serves as cofactor.

It is found in the cytoplasm. Its subcellular location is the secreted. It localises to the cell surface. The enzyme catalyses (2R)-2-phosphoglycerate = phosphoenolpyruvate + H2O. The protein operates within carbohydrate degradation; glycolysis; pyruvate from D-glyceraldehyde 3-phosphate: step 4/5. In terms of biological role, catalyzes the reversible conversion of 2-phosphoglycerate (2-PG) into phosphoenolpyruvate (PEP). It is essential for the degradation of carbohydrates via glycolysis. In Mycobacterium leprae (strain TN), this protein is Enolase.